The following is a 127-amino-acid chain: Fatty acid-binding protein, liver-type (127 aa).

Belongs to the calycin superfamily. Fatty-acid binding protein (FABP) family.

The protein resides in the cytoplasm. The chain is Fatty acid-binding protein, liver-type (fabp1) from Epinephelus coioides (Orange-spotted grouper).